Reading from the N-terminus, the 369-residue chain is RNA pseudouridine synthase 5 (369 aa).

One can recognise an S4 RNA-binding domain in the interval 47 to 104 (APLLGWIQRIQNGQIQIDGEVVKDPNTLLRSGSKLVYSRLPWKEPDTPYSLEVLYEDD).

The protein belongs to the pseudouridine synthase RluA family.

The catalysed reaction is a uridine in RNA = a pseudouridine in RNA. The chain is RNA pseudouridine synthase 5 from Arabidopsis thaliana (Mouse-ear cress).